A 243-amino-acid chain; its full sequence is Probable fructoselysine utilization operon transcriptional repressor (243 aa).

The HTH gntR-type domain occupies 10–78; that stretch reads QLLYATVRQR…QGKGTFVQSQ (69 aa). The segment at residues 38–57 is a DNA-binding region (H-T-H motif); that stretch reads ENELCTQYNVSRITIRKAIS.

Its pathway is carbohydrate metabolism; fructoselysine degradation [regulation]. Functionally, may regulate the transcription of the frlABCDR operon, involved in the utilization of fructoselysine and psicoselysine. The chain is Probable fructoselysine utilization operon transcriptional repressor (frlR) from Escherichia coli O157:H7.